A 161-amino-acid chain; its full sequence is Phosphopantetheine adenylyltransferase (161 aa).

Threonine 9 contributes to the substrate binding site. Residues 9–10 (TF) and histidine 17 contribute to the ATP site. Substrate is bound by residues lysine 41, leucine 73, and arginine 87. ATP contacts are provided by residues 88 to 90 (GLR), glutamate 98, and 123 to 129 (YQFISGT).

This sequence belongs to the bacterial CoaD family. Homohexamer. Mg(2+) is required as a cofactor.

It is found in the cytoplasm. It carries out the reaction (R)-4'-phosphopantetheine + ATP + H(+) = 3'-dephospho-CoA + diphosphate. It functions in the pathway cofactor biosynthesis; coenzyme A biosynthesis; CoA from (R)-pantothenate: step 4/5. Its function is as follows. Reversibly transfers an adenylyl group from ATP to 4'-phosphopantetheine, yielding dephospho-CoA (dPCoA) and pyrophosphate. The chain is Phosphopantetheine adenylyltransferase from Cupriavidus metallidurans (strain ATCC 43123 / DSM 2839 / NBRC 102507 / CH34) (Ralstonia metallidurans).